Consider the following 306-residue polypeptide: Agmatinase (306 aa).

Residues His-126, Asp-149, His-151, Asp-153, Asp-230, and Asp-232 each contribute to the Mn(2+) site.

This sequence belongs to the arginase family. Agmatinase subfamily. The cofactor is Mn(2+).

The enzyme catalyses agmatine + H2O = urea + putrescine. Its pathway is amine and polyamine biosynthesis; putrescine biosynthesis via agmatine pathway; putrescine from agmatine: step 1/1. In terms of biological role, catalyzes the formation of putrescine from agmatine. The polypeptide is Agmatinase (Salmonella agona (strain SL483)).